A 130-amino-acid polypeptide reads, in one-letter code: Small ribosomal subunit protein uS9 (130 aa).

Belongs to the universal ribosomal protein uS9 family.

The protein is Small ribosomal subunit protein uS9 of Pseudoalteromonas atlantica (strain T6c / ATCC BAA-1087).